The sequence spans 401 residues: Exodeoxyribonuclease 7 large subunit (401 aa).

This sequence belongs to the XseA family. In terms of assembly, heterooligomer composed of large and small subunits.

Its subcellular location is the cytoplasm. The catalysed reaction is Exonucleolytic cleavage in either 5'- to 3'- or 3'- to 5'-direction to yield nucleoside 5'-phosphates.. Functionally, bidirectionally degrades single-stranded DNA into large acid-insoluble oligonucleotides, which are then degraded further into small acid-soluble oligonucleotides. This chain is Exodeoxyribonuclease 7 large subunit, found in Clostridium botulinum (strain Langeland / NCTC 10281 / Type F).